The following is a 461-amino-acid chain: UDP-N-acetylmuramate--L-alanine ligase (461 aa).

112–118 provides a ligand contact to ATP; the sequence is GTHGKTT.

Belongs to the MurCDEF family.

The protein resides in the cytoplasm. It catalyses the reaction UDP-N-acetyl-alpha-D-muramate + L-alanine + ATP = UDP-N-acetyl-alpha-D-muramoyl-L-alanine + ADP + phosphate + H(+). It functions in the pathway cell wall biogenesis; peptidoglycan biosynthesis. Its function is as follows. Cell wall formation. The chain is UDP-N-acetylmuramate--L-alanine ligase from Geobacter sp. (strain M21).